The sequence spans 853 residues: Auxin response factor 23 (853 aa).

Positions 118 to 141 (PESKQQEDNGSTEEEVPSAPAAGH) are disordered. A DNA-binding region (TF-B3) is located at residues 149–251 (FCKTLTASDT…ELRVGVRRAM (103 aa)). 2 disordered regions span residues 422-484 (ESEP…RMQM) and 647-723 (PAKS…QGVS). Over residues 425–455 (PNGTQRTFQTQENATPKSGFGNSSELESAQK) the composition is skewed to polar residues. The span at 672 to 686 (EWRRPDVTEVEKCSD) shows a compositional bias: basic and acidic residues. Positions 706–723 (PSSQQASRNMSCKSQGVS) are enriched in polar residues. Residues 725–809 (RSCKKVHKQG…HKIFIYTREE (85 aa)) form the PB1 domain. The tract at residues 815 to 853 (PGTLNSRSEDSHANSMERGSVGREMRGCLSTSSLNSENC) is disordered. Positions 843-853 (LSTSSLNSENC) are enriched in polar residues.

Belongs to the ARF family. As to quaternary structure, homodimers and heterodimers. Interacts with CRL1. Expressed in roots, culms, leaves and young panicles.

The protein localises to the nucleus. Auxin response factors (ARFs) are transcriptional factors that bind specifically to the DNA sequence 5'-TGTCTC-3' found in the auxin-responsive promoter elements (AuxREs). The polypeptide is Auxin response factor 23 (ARF23) (Oryza sativa subsp. japonica (Rice)).